A 234-amino-acid chain; its full sequence is tRNA (guanine-N(1)-)-methyltransferase (234 aa).

S-adenosyl-L-methionine-binding positions include Gly-115 and 135-140; that span reads VGDYIL.

This sequence belongs to the RNA methyltransferase TrmD family. Homodimer.

Its subcellular location is the cytoplasm. The catalysed reaction is guanosine(37) in tRNA + S-adenosyl-L-methionine = N(1)-methylguanosine(37) in tRNA + S-adenosyl-L-homocysteine + H(+). Specifically methylates guanosine-37 in various tRNAs. This Rickettsia peacockii (strain Rustic) protein is tRNA (guanine-N(1)-)-methyltransferase.